Consider the following 205-residue polypeptide: Holliday junction branch migration complex subunit RuvA (205 aa).

The interval 1-67 (MIGWLKGDVQ…ADNLQLFGFL (67 aa)) is domain I. Positions 68-146 (QLAERDLFRE…DSVASTGPER (79 aa)) are domain II. The tract at residues 147-155 (NQLDPVAPD) is flexible linker. The tract at residues 155-205 (DLIATLETLGFETHEIRDALQRLNGMGGPQDGDDDDAWLRACIKLMSSTDP) is domain III.

It belongs to the RuvA family. Homotetramer. Forms an RuvA(8)-RuvB(12)-Holliday junction (HJ) complex. HJ DNA is sandwiched between 2 RuvA tetramers; dsDNA enters through RuvA and exits via RuvB. An RuvB hexamer assembles on each DNA strand where it exits the tetramer. Each RuvB hexamer is contacted by two RuvA subunits (via domain III) on 2 adjacent RuvB subunits; this complex drives branch migration. In the full resolvosome a probable DNA-RuvA(4)-RuvB(12)-RuvC(2) complex forms which resolves the HJ.

The protein localises to the cytoplasm. Functionally, the RuvA-RuvB-RuvC complex processes Holliday junction (HJ) DNA during genetic recombination and DNA repair, while the RuvA-RuvB complex plays an important role in the rescue of blocked DNA replication forks via replication fork reversal (RFR). RuvA specifically binds to HJ cruciform DNA, conferring on it an open structure. The RuvB hexamer acts as an ATP-dependent pump, pulling dsDNA into and through the RuvAB complex. HJ branch migration allows RuvC to scan DNA until it finds its consensus sequence, where it cleaves and resolves the cruciform DNA. This Parasynechococcus marenigrum (strain WH8102) protein is Holliday junction branch migration complex subunit RuvA.